The following is a 334-amino-acid chain: HTH-type transcriptional repressor PurR (334 aa).

An HTH lacI-type domain is found at A2 to V56. A DNA-binding region (H-T-H motif) is located at residues I4–N23. A DNA-binding region spans residues S48–V56. Y73, K189, T191, F220, and D274 together coordinate hypoxanthine.

As to quaternary structure, homodimer.

It functions in the pathway purine metabolism; purine nucleotide biosynthesis [regulation]. Functionally, is the main repressor of the genes involved in the de novo synthesis of purine nucleotides, regulating purB, purC, purEK, purF, purHD, purL, purMN and guaBA expression. PurR is allosterically activated to bind its cognate DNA by binding the purine corepressors, hypoxanthine or guanine, thereby effecting transcription repression. This is HTH-type transcriptional repressor PurR from Pasteurella multocida (strain Pm70).